Here is a 96-residue protein sequence, read N- to C-terminus: ATP synthase subunit c (96 aa).

Helical transmembrane passes span Phe9–Ile29 and Ile58–Ile78.

Belongs to the ATPase C chain family. In terms of assembly, F-type ATPases have 2 components, F(1) - the catalytic core - and F(0) - the membrane proton channel. F(1) has five subunits: alpha(3), beta(3), gamma(1), delta(1), epsilon(1). F(0) has three main subunits: a(1), b(2) and c(10-14). The alpha and beta chains form an alternating ring which encloses part of the gamma chain. F(1) is attached to F(0) by a central stalk formed by the gamma and epsilon chains, while a peripheral stalk is formed by the delta and b chains.

It is found in the cell inner membrane. In terms of biological role, f(1)F(0) ATP synthase produces ATP from ADP in the presence of a proton or sodium gradient. F-type ATPases consist of two structural domains, F(1) containing the extramembraneous catalytic core and F(0) containing the membrane proton channel, linked together by a central stalk and a peripheral stalk. During catalysis, ATP synthesis in the catalytic domain of F(1) is coupled via a rotary mechanism of the central stalk subunits to proton translocation. Functionally, key component of the F(0) channel; it plays a direct role in translocation across the membrane. A homomeric c-ring of between 10-14 subunits forms the central stalk rotor element with the F(1) delta and epsilon subunits. This Desulfosudis oleivorans (strain DSM 6200 / JCM 39069 / Hxd3) (Desulfococcus oleovorans) protein is ATP synthase subunit c.